The chain runs to 304 residues: MGSVGRLHCLTMTAAENPTPGDLALVPLVTCKLCLCEQSLDKMTTLQECRCIFCTACLKQYMQLAIREGCGSPITCPDMVCLNHGTLQEAEIACLVPVDQFQLYQRLKFEREVHLDPCRTWCPVADCQTVCPVATSDPGQPVLVECPSCHLKFCSCCKDAWHAEVSCRDSQPGILPTEHGTLFGTETDAPIKQCPVCRVYIERNEGCAQMMCKNCKHTFCWYCLQNLDNDIFLRHYDRGPCRNKLGHSRASVMWNRTQVVGILVGLGIIALVTSPLLLLASPCIICCVCKSCRGKKKKHDPSTT.

Residues 27-245 (PLVTCKLCLC…YDRGPCRNKL (219 aa)) form a TRIAD supradomain region. Residues Cys-31, Cys-34, Cys-54, Cys-57, Cys-122, Cys-127, Cys-146, Cys-149, Cys-154, Cys-157, His-162, Cys-167, Cys-194, and Cys-197 each contribute to the Zn(2+) site. The RING-type 1 zinc-finger motif lies at 31 to 81 (CKLCLCEQSLDKMTTLQECRCIFCTACLKQYMQLAIREGCGSPITCPDMVC). Residues 102–167 (QLYQRLKFER…KDAWHAEVSC (66 aa)) form an IBR-type zinc finger. An RING-type 2; atypical zinc finger spans residues 194-223 (CPVCRVYIERNEGCAQMMCKNCKHTFCWYC). Residue Cys-207 is part of the active site. Positions 212, 215, 220, 223, 235, and 241 each coordinate Zn(2+). Residues 259–279 (VVGILVGLGIIALVTSPLLLL) traverse the membrane as a helical segment.

Belongs to the RBR family. RNF144 subfamily. Interacts with UBE2L3, UBE2L6 and LCMT2, as well as with BAX. Interacts with TBK1; this interaction inhibits TBK1 phosphorylation and 'Lys-63'-linked polyubiquitination. Post-translationally, auto-ubiquitinated.

Its subcellular location is the mitochondrion membrane. The protein resides in the cytoplasm. It carries out the reaction [E2 ubiquitin-conjugating enzyme]-S-ubiquitinyl-L-cysteine + [acceptor protein]-L-lysine = [E2 ubiquitin-conjugating enzyme]-L-cysteine + [acceptor protein]-N(6)-ubiquitinyl-L-lysine.. The protein operates within protein modification; protein ubiquitination. Its function is as follows. E3 ubiquitin-protein ligase which accepts ubiquitin from E2 ubiquitin-conjugating enzymes UBE2L3 and UBE2L6 in the form of a thioester and then directly transfers the ubiquitin to targeted substrates such as LCMT2, thereby promoting their degradation. Induces apoptosis via a p53/TP53-dependent but caspase-independent mechanism. Plays a crucial role in maintaining the genomic stability by controlling the degradation of multiple proteins involved in mitotic progression and DNA damage. Regulates epithelial homeostasis by mediating degradation of CDKN1A and isoform 2 of TP63. Plays a regulatory role in innate immunity by negatively regulating IRF3 activation and IFN-beta production. Mechanistically, inhibits TBK1 phosphorylation and 'Lys-63'-linked polyubiquitination independently of its E3 ligase activity. Alternatively, promotes 'Lys-27' and 'Lys-33'-linked ubiquitination of IFIH1/MDA5, promoting selective autophagic degradation of IFIH1/MDA5 to inhibit antiviral response. The polypeptide is E3 ubiquitin-protein ligase RNF144B (RNF144B) (Bos taurus (Bovine)).